Consider the following 741-residue polypeptide: MLKKIVTALGMSGMLLASSNAIAEDTTTKNDNLSPQSVDLSPLRNLNKLDSPMDKDYNYHQAFKKLDTEQLKKDMQDLLTQSQDWWPADFGNYGPFFIRLSWHDAGTYRIYDGRGGANRGQQRFSPLNSWPDNVNLDKARQLLWPIKQKYGDAVSWSDLIVLAGTVSLESMGMKPIGFAFGREDDWQGDDTNWGLSPEEIMSSNVRDGKLAPAYAATQMGLIYVNPEGPDGKPDIKGAASEIRQAFRAMGMTDKETVALIAGGHTFGKTHGAVPEDKVKQTIGPAPDKAPIEQQGLGWHNSYGTGNGDDTMGSGLEGSWTSTPTFWNHDFLHNLYNLDWKKTLSPAGAHQWTPTNAKPENMVPDAHKPGVKHKPIMFTTDLALKEDDGFNKYTQEFYNNPEEFKEEFAKAWFKLTHRDMGPKSRYIGPWIPEQNFIWQDPVPAADYKQVSTQDIAQLEQDIINSGLTNQQLIKTAWDSASTYRKTDYRGGSNGARIALAPEKDWQMNEPAKLEVVLTKLKEIQTNFNNSKTDGTKVSLADLIVLGGNVGVEQAAKQAGYNIQMPFVPGRTDATQAQTDIESFNYLKTKSDGFINYTDGSVSADKLPQTLVEKASMLDLNIPEMTVLVGGMRALDVNYDNSQEGVLTTTPGQLNNSFFVNLLDMSTQWKKSDKKDGEYIGIDRKTGKQKWTASPVDLIFGSNSELKAVAQVYAENGNEQKFVNDFAKAWHKVMMLGRFDVQQ.

Residues 1–23 (MLKKIVTALGMSGMLLASSNAIA) form the signal peptide. Positions 102-223 (WHDAGTYRIY…YAATQMGLIY (122 aa)) form a cross-link, tryptophyl-tyrosyl-methioninium (Trp-Tyr) (with M-249). His-103 acts as the Proton acceptor in catalysis. Residues 223 to 249 (YVNPEGPDGKPDIKGAASEIRQAFRAM) constitute a cross-link (tryptophyl-tyrosyl-methioninium (Tyr-Met) (with W-102)). His-264 serves as a coordination point for heme b.

Belongs to the peroxidase family. Peroxidase/catalase subfamily. Homodimer or homotetramer. Heme b is required as a cofactor. Post-translationally, formation of the three residue Trp-Tyr-Met cross-link is important for the catalase, but not the peroxidase activity of the enzyme.

It catalyses the reaction H2O2 + AH2 = A + 2 H2O. The catalysed reaction is 2 H2O2 = O2 + 2 H2O. Functionally, bifunctional enzyme with both catalase and broad-spectrum peroxidase activity. The protein is Catalase-peroxidase of Francisella tularensis subsp. tularensis (strain WY96-3418).